The following is a 387-amino-acid chain: Phosphoglycerate kinase (387 aa).

Substrate is bound by residues 21–23 (DLN), Arg-36, 59–62 (HLGR), Arg-113, and Arg-146. Residues Lys-197, Glu-314, and 340–343 (GGDT) contribute to the ATP site.

The protein belongs to the phosphoglycerate kinase family. In terms of assembly, monomer.

Its subcellular location is the cytoplasm. It carries out the reaction (2R)-3-phosphoglycerate + ATP = (2R)-3-phospho-glyceroyl phosphate + ADP. It functions in the pathway carbohydrate degradation; glycolysis; pyruvate from D-glyceraldehyde 3-phosphate: step 2/5. This chain is Phosphoglycerate kinase, found in Sodalis glossinidius (strain morsitans).